A 2136-amino-acid chain; its full sequence is U5 small nuclear ribonucleoprotein 200 kDa helicase (2136 aa).

Residues S17 and S26 each carry the phosphoserine modification. A Glycyl lysine isopeptide (Lys-Gly) (interchain with G-Cter in SUMO2) cross-link involves residue K46. A disordered region spans residues 50 to 80 (TRMGDKAQRTKPQMQEERRAKRRKRDEDRHD). A coiled-coil region spans residues 54-84 (DKAQRTKPQMQEERRAKRRKRDEDRHDINKM). Phosphoserine is present on S225. Residue T389 is modified to Phosphothreonine. Residues 395–2129 (DLDQGGEALA…YKFSVDVKEA (1735 aa)) form an interaction with C9orf78 and WBP4 region. The 184-residue stretch at 490–673 (RAALETDENL…FLRVDPAKGL (184 aa)) folds into the Helicase ATP-binding 1 domain. 503–510 (APTGAGKT) is a binding site for ATP. Residues 615 to 618 (DEIH) carry the DEIH box motif. The Helicase C-terminal 1 domain occupies 684–921 (PLEQTYVGIT…NAKDAVNWLG (238 aa)). Residue Y709 is modified to Phosphotyrosine. At K971 the chain carries N6-acetyllysine. The 306-residue stretch at 981 to 1286 (VTELGRIASH…SCETQLPVSF (306 aa)) folds into the SEC63 1 domain. The segment at 1282–2136 (LPVSFRHLIL…KEAETDSDSD (855 aa)) is interaction with TSSC4. Residues 1337–1512 (NTVYNSDDNV…WLGCSATSTF (176 aa)) form the Helicase ATP-binding 2 domain. An ATP-binding site is contributed by 1350-1357 (APTGSGKT). T1428 is modified (phosphothreonine). Positions 1454–1457 (DEVH) match the DEVH box motif. The Helicase C-terminal 2 domain occupies 1545–1753 (PVYHAITKHS…TIENKQDAVD (209 aa)). T1765 is subject to Phosphothreonine. In terms of domain architecture, SEC63 2 spans 1812 to 2124 (PLNLGMIAAY…GCDQEYKFSV (313 aa)). A Phosphoserine modification is found at S2002. T2131 bears the Phosphothreonine mark. Phosphoserine is present on residues S2133 and S2135.

The protein belongs to the helicase family. SKI2 subfamily. Component of a core complex containing at least PRPF8, SNRNP200, EFTUD2 and SNRNP40. Component of the U5 snRNP and U4/U6-U5 tri-snRNP complexes, building blocks of the spliceosome. Component of the U4/U6-U5 tri-snRNP complex composed of the U4, U6 and U5 snRNAs and at least PRPF3, PRPF4, PRPF6, PRPF8, PRPF31, SNRNP200, TXNL4A, SNRNP40, DDX23, CD2BP2, PPIH, SNU13, EFTUD2, SART1 and USP39. Component of precatalytic, catalytic and postcatalytic spliceosomal complexes. Component of the minor spliceosome, which splices U12-type introns. Interacts with C9orf78; the interaction is direct and mutually exclusive with its interaction with WBP4. Interacts with WBP4; the interaction is mutually exclusive with its interaction with C9orf78. Interacts with PRPF8. Interacts with TSSC4; the interaction is direct, excludes recruitment of C9ORF78 and WBP4 to SNRNP200 and negatively regulates its RNA helicase activity. In terms of tissue distribution, widely expressed.

Its subcellular location is the nucleus. It carries out the reaction ATP + H2O = ADP + phosphate + H(+). Catalyzes the ATP-dependent unwinding of U4/U6 RNA duplices, an essential step in the assembly of a catalytically active spliceosome. Plays a role in pre-mRNA splicing as a core component of precatalytic, catalytic and postcatalytic spliceosomal complexes. As a component of the minor spliceosome, involved in the splicing of U12-type introns in pre-mRNAs. Involved in spliceosome assembly, activation and disassembly. Mediates changes in the dynamic network of RNA-RNA interactions in the spliceosome. This chain is U5 small nuclear ribonucleoprotein 200 kDa helicase (SNRNP200), found in Homo sapiens (Human).